Consider the following 304-residue polypeptide: Mitochondrial RNA-splicing protein MRS4 (304 aa).

3 Solcar repeats span residues 21 to 108 (APLH…CKAR), 118 to 200 (HQPM…ASKF), and 207 to 300 (YNPL…AKHF). The next 6 membrane-spanning stretches (helical) occupy residues 23 to 41 (LHSQ…HSLM), 83 to 102 (GVQS…FGTY), 120 to 139 (PMKT…ALMN), 175 to 194 (SYPT…FMIY), 209 to 228 (PLIH…ALTT), and 275 to 288 (GLKP…PATA).

The protein belongs to the mitochondrial carrier (TC 2.A.29) family.

The protein localises to the mitochondrion inner membrane. Functionally, MRS4 suppresses a mitochondrial splice defect in the first intron of the COB gene. It may act as a carrier, exerting its suppressor activity via modulation of solute concentrations in the mitochondrion (possibly of cations). Not essential. The sequence is that of Mitochondrial RNA-splicing protein MRS4 (MRS4) from Saccharomyces cerevisiae (strain ATCC 204508 / S288c) (Baker's yeast).